Consider the following 132-residue polypeptide: UPF0201 protein MTH_433 (132 aa).

This sequence belongs to the UPF0201 family.

In Methanothermobacter thermautotrophicus (strain ATCC 29096 / DSM 1053 / JCM 10044 / NBRC 100330 / Delta H) (Methanobacterium thermoautotrophicum), this protein is UPF0201 protein MTH_433.